The primary structure comprises 112 residues: UPF0122 protein CPF_1968 (112 aa).

This sequence belongs to the UPF0122 family.

Functionally, might take part in the signal recognition particle (SRP) pathway. This is inferred from the conservation of its genetic proximity to ftsY/ffh. May be a regulatory protein. This is UPF0122 protein CPF_1968 from Clostridium perfringens (strain ATCC 13124 / DSM 756 / JCM 1290 / NCIMB 6125 / NCTC 8237 / Type A).